Reading from the N-terminus, the 229-residue chain is Movement and silencing protein TGBp1 (229 aa).

In terms of domain architecture, (+)RNA virus helicase ATP-binding spans methionine 1 to lysine 114. In terms of domain architecture, (+)RNA virus helicase C-terminal spans leucine 115–alanine 229.

Belongs to the Tymovirales TGBp1 protein family. Homodimer and homooligomer. Interacts with capsid protein. Interacts with host AGO1; this interaction targets the host protein for degradation, thereby suppressing the antiviral RNA silencing.

It localises to the host cytoplasm. Transports viral genome to neighboring plant cells directly through plasmosdesmata, without any budding. The movement protein allows efficient cell to cell propagation, by bypassing the host cell wall barrier. Increases plasmodesma size exclusion limit. Acts as a suppressor of RNA-mediated gene silencing, also known as post-transcriptional gene silencing (PTGS), a mechanism of plant viral defense that limits the accumulation of viral RNAs. The protein is Movement and silencing protein TGBp1 of Strawberry mild yellow edge-associated virus (SMYEaV).